Here is a 320-residue protein sequence, read N- to C-terminus: Acetyl-coenzyme A carboxylase carboxyl transferase subunit alpha (320 aa).

One can recognise a CoA carboxyltransferase C-terminal domain in the interval 41-295; the sequence is SIEEKAAQAL…GDAIAGALND (255 aa).

This sequence belongs to the AccA family. In terms of assembly, acetyl-CoA carboxylase is a heterohexamer composed of biotin carboxyl carrier protein (AccB), biotin carboxylase (AccC) and two subunits each of ACCase subunit alpha (AccA) and ACCase subunit beta (AccD).

The protein localises to the cytoplasm. It catalyses the reaction N(6)-carboxybiotinyl-L-lysyl-[protein] + acetyl-CoA = N(6)-biotinyl-L-lysyl-[protein] + malonyl-CoA. The protein operates within lipid metabolism; malonyl-CoA biosynthesis; malonyl-CoA from acetyl-CoA: step 1/1. Component of the acetyl coenzyme A carboxylase (ACC) complex. First, biotin carboxylase catalyzes the carboxylation of biotin on its carrier protein (BCCP) and then the CO(2) group is transferred by the carboxyltransferase to acetyl-CoA to form malonyl-CoA. The chain is Acetyl-coenzyme A carboxylase carboxyl transferase subunit alpha from Nitrobacter winogradskyi (strain ATCC 25391 / DSM 10237 / CIP 104748 / NCIMB 11846 / Nb-255).